A 391-amino-acid chain; its full sequence is Steroid side-chain-cleaving aldolase (391 aa).

Tyr-294 acts as the Proton acceptor in catalysis. Catalysis depends on Tyr-344, which acts as the Proton donor.

It belongs to the thiolase-like superfamily. As to quaternary structure, homodimer. Interacts with the ChsH1/ChsH2 hydratase via the DUF35 C-terminal region of ChsH2 (ChsH2-DUF35).

The enzyme catalyses 17-hydroxy-3-oxochol-4-en-22-oyl-CoA = androst-4-ene-3,17-dione + propanoyl-CoA. Probably involved in bile acid degradation. In vitro, when associated with the ChsH1/ChsH2 hydratase, catalyzes the retroaldol cleavage of 17-hydroxy-3-oxo-4-pregnene-20-carboxyl-CoA (17-HOPC-CoA), forming androst-4-ene-3,17-dione and propionyl-CoA. The in vivo substrate is probably a closely analogous bile acid degradation metabolite. The protein is Steroid side-chain-cleaving aldolase of Thermomonospora curvata (strain ATCC 19995 / DSM 43183 / JCM 3096 / KCTC 9072 / NBRC 15933 / NCIMB 10081 / Henssen B9).